A 322-amino-acid polypeptide reads, in one-letter code: tRNA U34 carboxymethyltransferase (322 aa).

Carboxy-S-adenosyl-L-methionine is bound by residues Lys91, Trp105, Lys110, Gly129, Met195, Tyr199, and Arg314.

This sequence belongs to the class I-like SAM-binding methyltransferase superfamily. CmoB family. Homotetramer.

The enzyme catalyses carboxy-S-adenosyl-L-methionine + 5-hydroxyuridine(34) in tRNA = 5-carboxymethoxyuridine(34) in tRNA + S-adenosyl-L-homocysteine + H(+). Its function is as follows. Catalyzes carboxymethyl transfer from carboxy-S-adenosyl-L-methionine (Cx-SAM) to 5-hydroxyuridine (ho5U) to form 5-carboxymethoxyuridine (cmo5U) at position 34 in tRNAs. This Ectopseudomonas mendocina (strain ymp) (Pseudomonas mendocina) protein is tRNA U34 carboxymethyltransferase.